A 156-amino-acid chain; its full sequence is Histone acetyltransferase HPA2 (156 aa).

An N-acetyltransferase domain is found at 9 to 156 (ITVRFVTEND…PKILYKRKGY (148 aa)). 93–106 (LYVDENSRVKGAGG) provides a ligand contact to acetyl-CoA.

It belongs to the acetyltransferase family. GNAT subfamily. As to quaternary structure, forms homodimers in the absence, and homotetramers in the presence of acetyl-CoA. In terms of processing, autoacetylates in an intermolecular reaction.

It carries out the reaction L-lysyl-[protein] + acetyl-CoA = N(6)-acetyl-L-lysyl-[protein] + CoA + H(+). In terms of biological role, N-acetyltransferase that acetylates histone H3 at 'Lys-14' and histone H4 at 'Lys-5' and 'Lys-12'. Also acetylates polyamines like putrescine, spermidine and spermine, and certain other small basic proteins like nuclear HMG proteins. The chain is Histone acetyltransferase HPA2 from Saccharomyces cerevisiae (strain ATCC 204508 / S288c) (Baker's yeast).